Consider the following 94-residue polypeptide: DNA-directed RNA polymerase subunit Rpo11 (94 aa).

It belongs to the archaeal Rpo11/eukaryotic RPB11/RPC19 RNA polymerase subunit family. As to quaternary structure, part of the RNA polymerase complex.

It localises to the cytoplasm. The enzyme catalyses RNA(n) + a ribonucleoside 5'-triphosphate = RNA(n+1) + diphosphate. Functionally, DNA-dependent RNA polymerase (RNAP) catalyzes the transcription of DNA into RNA using the four ribonucleoside triphosphates as substrates. The protein is DNA-directed RNA polymerase subunit Rpo11 of Thermococcus kodakarensis (strain ATCC BAA-918 / JCM 12380 / KOD1) (Pyrococcus kodakaraensis (strain KOD1)).